The sequence spans 548 residues: Chaperonin GroEL (548 aa).

ATP is bound by residues Thr-30–Pro-33, Lys-51, Asp-87–Thr-91, Gly-415, Asn-479–Ala-481, and Asp-495.

This sequence belongs to the chaperonin (HSP60) family. As to quaternary structure, forms a cylinder of 14 subunits composed of two heptameric rings stacked back-to-back. Interacts with the co-chaperonin GroES.

The protein resides in the cytoplasm. It catalyses the reaction ATP + H2O + a folded polypeptide = ADP + phosphate + an unfolded polypeptide.. In terms of biological role, together with its co-chaperonin GroES, plays an essential role in assisting protein folding. The GroEL-GroES system forms a nano-cage that allows encapsulation of the non-native substrate proteins and provides a physical environment optimized to promote and accelerate protein folding. In Salmonella arizonae (strain ATCC BAA-731 / CDC346-86 / RSK2980), this protein is Chaperonin GroEL.